A 748-amino-acid polypeptide reads, in one-letter code: Disintegrin and metalloproteinase domain-containing protein 10 (748 aa).

Positions 1 to 19 (MVLLRVLILLLSWVAGLGG) are cleaved as a signal peptide. A propeptide spanning residues 20–213 (QYGNPLNKYI…NGPELLRKKR (194 aa)) is cleaved from the precursor. Residues 20-672 (QYGNPLNKYI…SPELYENIAE (653 aa)) are Extracellular-facing. Positions 171–178 (GGCADHSV) match the Cysteine switch motif. Cys-173 serves as a coordination point for Zn(2+). The region spanning 220–456 (NTCQLYIQTD…KRNNCFVESG (237 aa)) is the Peptidase M12B domain. 2 N-linked (GlcNAc...) asparagine glycosylation sites follow: Asn-267 and Asn-278. Intrachain disulfides connect Cys-344-Cys-451, Cys-399-Cys-435, Cys-460-Cys-495, Cys-471-Cys-484, Cys-473-Cys-479, Cys-483-Cys-515, Cys-503-Cys-511, Cys-510-Cys-536, Cys-524-Cys-543, Cys-530-Cys-562, Cys-555-Cys-567, Cys-572-Cys-598, Cys-580-Cys-607, Cys-582-Cys-597, Cys-594-Cys-639, and Cys-632-Cys-645. Residue His-383 participates in Zn(2+) binding. The active site involves Glu-384. His-387 and His-393 together coordinate Zn(2+). Asn-439 carries N-linked (GlcNAc...) asparagine glycosylation. Residues 457-551 (QPICGNGMVE…LCPASDPKPN (95 aa)) enclose the Disintegrin domain. N-linked (GlcNAc...) asparagine glycosylation is present at Asn-551. A helical transmembrane segment spans residues 673 to 696 (WIVAYWWAVLLMGIALIMLMAGFI). Over 697–748 (KICSVHTPSSNPKLPPPKPLPGTLKRRRPPQPIQQPQRQRPRESYQMGHMRR) the chain is Cytoplasmic. The interval 704-748 (PSSNPKLPPPKPLPGTLKRRRPPQPIQQPQRQRPRESYQMGHMRR) is disordered. Residues 708-715 (PKLPPPKP) carry the SH3-binding motif. Position 719 is a phosphothreonine (Thr-719). Residues 722 to 728 (RRRPPQP) carry the SH3-binding motif. Residues 734–748 (RQRPRESYQMGHMRR) form an interaction with AP2A1, AP2A2 and AP2M1 region.

As to quaternary structure, forms a ternary EFNA5-EPHA3-ADAM10 complex mediating EFNA5 extracellular domain shedding by ADAM10 which regulates the EFNA5-EPHA3 complex internalization and function, the cleavage occurs in trans, with ADAM10 and its substrate being on the membranes of opposing cells. Interacts with the clathrin adapter AP2 complex subunits AP2A1, AP2A2, AP2B1, and AP2M1; this interaction facilitates ADAM10 endocytosis from the plasma membrane during long-term potentiation in hippocampal neurons. Forms a ternary complex composed of ADAM10, EPHA4 and CADH1; within the complex, ADAM10 cleaves CADH1 which disrupts adherens junctions. Interacts with EPHA2. Interacts with NGF in a divalent cation-dependent manner. Interacts with TSPAN14; the interaction promotes ADAM10 maturation and cell surface expression. Interacts with TSPAN5, TSPAN10, TSPAN14, TSPAN15, TSPAN17 and TSPAN33; these interactions regulate ADAM10 substrate specificity, endocytosis and turnover. Interacts (via extracellular domain) with TSPAN33 (via extracellular domain) and (via cytoplasmic domain) with AFDN; interaction with TSPAN33 allows the docking of ADAM10 to zonula adherens through a PDZ11-dependent interaction between TSPAN33 and PLEKHA7 while interaction with AFDN locks ADAM10 at zonula adherens. Interacts with DLG1; this interaction recruits ADAM10 to the cell membrane during long-term depression in hippocampal neurons. Interacts (via extracellular domain) with BACE1 (via extracellular domain). Interacts with FAM171A1. Zn(2+) is required as a cofactor. In terms of processing, the precursor is cleaved by furin and PCSK7. Expressed at low level in kidney, spleen, lung, adrenal, heart and peripheral nerve.

The protein resides in the golgi apparatus membrane. It localises to the cell membrane. The protein localises to the cytoplasmic vesicle. It is found in the clathrin-coated vesicle. Its subcellular location is the cell projection. The protein resides in the axon. It localises to the dendrite. The protein localises to the cell junction. It is found in the adherens junction. Its subcellular location is the cytoplasm. The catalysed reaction is Endopeptidase of broad specificity.. Catalytically inactive when the propeptide is intact and associated with the mature enzyme. The disintegrin and cysteine-rich regions modulate access of substrates to exerts an inhibitory effect on the cleavage of ADAM10 substrates. Transmembrane metalloprotease which mediates the ectodomain shedding of a myriad of transmembrane proteins, including adhesion proteins, growth factor precursors and cytokines being essential for development and tissue homeostasis. Associates with six members of the tetraspanin superfamily TspanC8 which regulate its exit from the endoplasmic reticulum and its substrate selectivity. Cleaves the membrane-bound precursor of TNF-alpha at '76-Ala-|-Val-77' to its mature soluble form. Responsible for the proteolytical release of soluble JAM3 from endothelial cells surface. Responsible for the proteolytic release of several other cell-surface proteins, including heparin-binding epidermal growth-like factor, ephrin-A2, CD44, CDH2 and for constitutive and regulated alpha-secretase cleavage of amyloid precursor protein (APP). Contributes to the normal cleavage of the cellular prion protein. Involved in the cleavage of the adhesion molecule L1 at the cell surface and in released membrane vesicles, suggesting a vesicle-based protease activity. Also controls the proteolytic processing of Notch and mediates lateral inhibition during neurogenesis. Required for the development of type 1 transitional B cells into marginal zone B cells, probably by cleaving Notch. Responsible for the FasL ectodomain shedding and for the generation of the remnant ADAM10-processed FasL (FasL APL) transmembrane form. Also cleaves the ectodomain of the integral membrane proteins CORIN and ITM2B. Mediates the proteolytic cleavage of LAG3, leading to release the secreted form of LAG3. Mediates the proteolytic cleavage of IL6R and IL11RA, leading to the release of secreted forms of IL6R and IL11RA. Enhances the cleavage of CHL1 by BACE1. Cleaves NRCAM. Cleaves TREM2, resulting in shedding of the TREM2 ectodomain. Involved in the development and maturation of glomerular and coronary vasculature. During development of the cochlear organ of Corti, promotes pillar cell separation by forming a ternary complex with CADH1 and EPHA4 and cleaving CADH1 at adherens junctions. May regulate the EFNA5-EPHA3 signaling. Regulates leukocyte transmigration as a sheddase for the adherens junction protein VE-cadherin/CDH5 in endothelial cells. The protein is Disintegrin and metalloproteinase domain-containing protein 10 (ADAM10) of Bos taurus (Bovine).